The chain runs to 468 residues: Chromatin assembly factor 1 subunit B (468 aa).

WD repeat units follow at residues 11-52 (HDSQ…NGQN), 69-108 (HHEQ…TQQE), 143-182 (TAAA…LVCG), 185-224 (DHGH…AGVV), and 371-413 (IHYS…SRIE).

Belongs to the WD repeat HIR1 family. As to quaternary structure, component of chromatin assembly factor 1 (CAF-1), composed of MSI1/p50, CAC2/p60 and CAC1/p90. Interacts with RTT106.

Its subcellular location is the nucleus. In terms of biological role, acts as a component of the histone chaperone complex chromatin assembly factor 1 (CAF-1), which assembles histone octamers onto replicating DNA. It performs the first step of the nucleosome assembly process, bringing newly synthesized histones H3 and H4 to replicating DNA; histones H2A/H2B can bind to this chromatin precursor subsequent to DNA replication to complete the histone octamer. Plays a role in the maintenance of heterochromatin. The chain is Chromatin assembly factor 1 subunit B (CAC2) from Saccharomyces cerevisiae (strain ATCC 204508 / S288c) (Baker's yeast).